The primary structure comprises 1416 residues: DNA-directed RNA polymerase subunit beta' (1416 aa).

Cysteine 71, cysteine 73, cysteine 86, and cysteine 89 together coordinate Zn(2+). Residues aspartate 461, aspartate 463, and aspartate 465 each contribute to the Mg(2+) site. Zn(2+) contacts are provided by cysteine 815, cysteine 892, cysteine 899, and cysteine 902.

It belongs to the RNA polymerase beta' chain family. The RNAP catalytic core consists of 2 alpha, 1 beta, 1 beta' and 1 omega subunit. When a sigma factor is associated with the core the holoenzyme is formed, which can initiate transcription. Mg(2+) serves as cofactor. The cofactor is Zn(2+).

It catalyses the reaction RNA(n) + a ribonucleoside 5'-triphosphate = RNA(n+1) + diphosphate. Its function is as follows. DNA-dependent RNA polymerase catalyzes the transcription of DNA into RNA using the four ribonucleoside triphosphates as substrates. In Blochmanniella pennsylvanica (strain BPEN), this protein is DNA-directed RNA polymerase subunit beta'.